A 226-amino-acid chain; its full sequence is MAKLKEPIIAINFKTYIEATGKRALEIAKAAERVWKETGITIVVAPQLADLRMIAESVEIPVFAQHIDPIKPGSHTGHVLPEAVKEVGAVGTLLNHSENRMILADLEAAIRRAEEVGLMTMVCSNNPAVSAAVAALGPDYVAVEPPELIGTGIPVSKAKPEVVTNTVELVKKVNPDVGVLTGAGISTGEDVKKALELGSVGVLLASGVTKAKDPENAIRDLVSLII.

A substrate-binding site is contributed by 12-14; that stretch reads NFK. His-96 functions as the Electrophile in the catalytic mechanism. The Proton acceptor role is filled by Glu-144. Substrate is bound by residues Ile-149, Gly-184, and 205–206; that span reads AS.

Belongs to the triosephosphate isomerase family. In terms of assembly, homotetramer; dimer of dimers.

It localises to the cytoplasm. It catalyses the reaction D-glyceraldehyde 3-phosphate = dihydroxyacetone phosphate. Its pathway is carbohydrate biosynthesis; gluconeogenesis. It participates in carbohydrate degradation; glycolysis; D-glyceraldehyde 3-phosphate from glycerone phosphate: step 1/1. Involved in the gluconeogenesis. Catalyzes stereospecifically the conversion of dihydroxyacetone phosphate (DHAP) to D-glyceraldehyde-3-phosphate (G3P). The protein is Triosephosphate isomerase of Thermococcus kodakarensis (strain ATCC BAA-918 / JCM 12380 / KOD1) (Pyrococcus kodakaraensis (strain KOD1)).